The sequence spans 98 residues: Co-chaperonin GroES (98 aa).

Belongs to the GroES chaperonin family. As to quaternary structure, heptamer of 7 subunits arranged in a ring. Interacts with the chaperonin GroEL.

It is found in the cytoplasm. Functionally, together with the chaperonin GroEL, plays an essential role in assisting protein folding. The GroEL-GroES system forms a nano-cage that allows encapsulation of the non-native substrate proteins and provides a physical environment optimized to promote and accelerate protein folding. GroES binds to the apical surface of the GroEL ring, thereby capping the opening of the GroEL channel. The polypeptide is Co-chaperonin GroES (Clavibacter michiganensis subsp. michiganensis (strain NCPPB 382)).